Consider the following 238-residue polypeptide: Peroxisomal biogenesis factor 11 (238 aa).

This sequence belongs to the peroxin-11 family.

It is found in the mitochondrion. It localises to the peroxisome membrane. Involved in peroxisomal proliferation. Promotes peroxisome division and biogenesis. The sequence is that of Peroxisomal biogenesis factor 11 (pex11) from Schizosaccharomyces pombe (strain 972 / ATCC 24843) (Fission yeast).